The primary structure comprises 306 residues: N-acetylmuramic acid 6-phosphate etherase (306 aa).

The 164-residue stretch at 55–218 (AAATLLAGGR…STGAMIKIGK (164 aa)) folds into the SIS domain. The active-site Proton donor is the Glu-83. Residue Glu-114 is part of the active site.

Belongs to the GCKR-like family. MurNAc-6-P etherase subfamily. As to quaternary structure, homodimer.

The catalysed reaction is N-acetyl-D-muramate 6-phosphate + H2O = N-acetyl-D-glucosamine 6-phosphate + (R)-lactate. It participates in amino-sugar metabolism; 1,6-anhydro-N-acetylmuramate degradation. Its pathway is amino-sugar metabolism; N-acetylmuramate degradation. The protein operates within cell wall biogenesis; peptidoglycan recycling. Its function is as follows. Specifically catalyzes the cleavage of the D-lactyl ether substituent of MurNAc 6-phosphate, producing GlcNAc 6-phosphate and D-lactate. Together with AnmK, is also required for the utilization of anhydro-N-acetylmuramic acid (anhMurNAc) either imported from the medium or derived from its own cell wall murein, and thus plays a role in cell wall recycling. The sequence is that of N-acetylmuramic acid 6-phosphate etherase from Erwinia tasmaniensis (strain DSM 17950 / CFBP 7177 / CIP 109463 / NCPPB 4357 / Et1/99).